A 477-amino-acid chain; its full sequence is Cysteine--tRNA ligase (477 aa).

Position 29 (Cys29) interacts with Zn(2+). Residues 31–41 carry the 'HIGH' region motif; the sequence is PTVYDYPHLGH. Residues Cys209, His234, and Glu238 each contribute to the Zn(2+) site. The 'KMSKS' region motif lies at 266–270; the sequence is KMSKS. Lys269 is an ATP binding site.

This sequence belongs to the class-I aminoacyl-tRNA synthetase family. The cofactor is Zn(2+).

Its subcellular location is the cytoplasm. It catalyses the reaction tRNA(Cys) + L-cysteine + ATP = L-cysteinyl-tRNA(Cys) + AMP + diphosphate. The polypeptide is Cysteine--tRNA ligase (cysS) (Pyrococcus abyssi (strain GE5 / Orsay)).